Reading from the N-terminus, the 627-residue chain is (-)-alpha-pinene synthase 1, chloroplastic (627 aa).

The transit peptide at 1-36 directs the protein to the chloroplast; sequence MALVSIAPLASKSCLHKSLSSSAHELKTICRTIPTL. Positions 378, 382, and 530 each coordinate Mg(2+). Positions 378–382 match the DDXXD motif motif; sequence DDMYD.

Belongs to the terpene synthase family. Tpsd subfamily. The cofactor is Mg(2+). It depends on Mn(2+) as a cofactor.

Its subcellular location is the plastid. The protein resides in the chloroplast. The enzyme catalyses (2E)-geranyl diphosphate = (1S,5S)-beta-pinene + diphosphate. The catalysed reaction is (2E)-geranyl diphosphate = (1S,5S)-alpha-pinene + diphosphate. The protein operates within terpene metabolism; oleoresin biosynthesis. Its function is as follows. Terpene synthase (TPS) involved in the biosynthesis of monoterpene natural products included in conifer oleoresin secretions and volatile emissions; these compounds contribute to biotic and abiotic stress defense against herbivores and pathogens. Catalyzes the conversion of (2E)-geranyl diphosphate (GPP) to (1S,5S)-beta-pinene. The polypeptide is (-)-alpha-pinene synthase 1, chloroplastic (Picea sitchensis (Sitka spruce)).